A 374-amino-acid polypeptide reads, in one-letter code: Autophagy-related protein 18e (374 aa).

4 WD repeats span residues 28 to 66 (KSDLKVLSVAWNQVCSGFIVGTNHGFNVYSCKPMIKKSI), 72 to 117 (ESGF…CLSE), 202 to 242 (AHDS…LLQE), and 247 to 286 (VERAEIYNVAISSNLKWVAASSEKGTLHVFRLRPDILSFD).

Belongs to the WD repeat PROPPIN family. Component of the PI(3,5)P2 regulatory complex at least composed of ATG18, SAC/FIG4, FAB1 and VAC14.

The protein localises to the preautophagosomal structure membrane. It is found in the vacuole membrane. The PI(3,5)P2 regulatory complex regulates both the synthesis and turnover of phosphatidylinositol 3,5-bisphosphate (PtdIns(3,5)P2). Required for autophagy. The sequence is that of Autophagy-related protein 18e (ATG18E) from Arabidopsis thaliana (Mouse-ear cress).